Reading from the N-terminus, the 408-residue chain is S-adenosylmethionine sensor upstream of mTORC1 (408 aa).

Residues 1 to 16 (MEAAPRSRPRPGGAAA) are compositionally biased toward low complexity. The disordered stretch occupies residues 1 to 37 (MEAAPRSRPRPGGAAASPPPPPPPPPPEQERKLEQEK). The span at 17–27 (SPPPPPPPPPP) shows a compositional bias: pro residues. Residues 28–37 (EQERKLEQEK) are compositionally biased toward basic and acidic residues. 6 residues coordinate S-adenosyl-L-methionine: Arg-97, Gly-175, Asp-193, Asp-205, Phe-206, and Ser-247.

The protein belongs to the BMT2/SAMTOR family. Interacts with the GATOR1 complex; interaction is disrupted when SAMTOR binds S-adenosyl-L-methionine. Interacts with the KICSTOR complex; interaction is disrupted when SAMTOR binds S-adenosyl-L-methionine.

Its function is as follows. S-adenosyl-L-methionine-binding protein that acts as an inhibitor of mTORC1 signaling via interaction with the GATOR1 and KICSTOR complexes. Acts as a sensor of S-adenosyl-L-methionine to signal methionine sufficiency to mTORC1: in presence of methionine, binds S-adenosyl-L-methionine, leading to disrupt interaction with the GATOR1 and KICSTOR complexes and promote mTORC1 signaling. Upon methionine starvation, S-adenosyl-L-methionine levels are reduced, thereby promoting the association with GATOR1 and KICSTOR, leading to inhibit mTORC1 signaling. Probably also acts as a S-adenosyl-L-methionine-dependent methyltransferase. This is S-adenosylmethionine sensor upstream of mTORC1 from Gallus gallus (Chicken).